We begin with the raw amino-acid sequence, 510 residues long: Tryptophan 6-hydroxylase fscE (510 aa).

The helical transmembrane segment at 11 to 31 (LLPIEGVIILVFVLSCFSLAI) threads the bilayer. A heme-binding site is contributed by Cys-452.

Belongs to the cytochrome P450 family. It depends on heme as a cofactor.

It is found in the membrane. Its pathway is secondary metabolite biosynthesis. Tryptophan 6-hydroxylase; part of the fragmented gene cluster that mediates the biosynthesis of fusarochromene, a tryptophan-derived metabolite closely related to a group of mycotoxins including fusarochromanone. Within the pathway, fscE hydroxalates the first intermediate D-tryptophan to yield 6-hydroxytryptophan. The first step of the pathway is the epimerization of L-tryptophan to D-tryptophan in the presence of the NRPS-like tryptophan epimerase fscC. D-tryptophan is subsequently hydroxylated by the tryptophan 6-hydroxylase fscE to yield 6-hydroxytryptophan. The pyrrole ring undergoes cleavaged by the tryptophan 2,3-dioxygenase fscD and is finally converted to 4-hydroxykyrunenine by the hydrolase fscH. The NRPS-like oxidoreductase fscA reduces the carboxyl group to primary alcohol and the DMATS-type prenyltransferase fscG performs prenylation, followed by the formation of a chromene ring catalyzed by the oxidoreductase fscI, which leads to desacetylfusarochromene. Epoxidation by fscF and rearrangement reactions of chromene double bonds convert compound desacetylfusarochromene to fusarochromanones. Although specific acetyltransferases were not found near the fsc gene cluster, several predicted enzymes containing the N-acetyltransferase superfamily domain are present in the genome of F.equiseti. These predicted enzymes may have the potential to convert desacetylfusarochromene to fusarochromene. The polypeptide is Tryptophan 6-hydroxylase fscE (Fusarium equiseti (Fusarium scirpi)).